Reading from the N-terminus, the 102-residue chain is NADH-quinone oxidoreductase subunit K (102 aa).

Helical transmembrane passes span 5–25 (LAHY…GIFV), 30–50 (IIVI…NLVA), and 62–82 (IFAM…LAIL).

Belongs to the complex I subunit 4L family. NDH-1 is composed of 14 different subunits. Subunits NuoA, H, J, K, L, M, N constitute the membrane sector of the complex.

Its subcellular location is the cell inner membrane. It catalyses the reaction a quinone + NADH + 5 H(+)(in) = a quinol + NAD(+) + 4 H(+)(out). In terms of biological role, NDH-1 shuttles electrons from NADH, via FMN and iron-sulfur (Fe-S) centers, to quinones in the respiratory chain. The immediate electron acceptor for the enzyme in this species is believed to be ubiquinone. Couples the redox reaction to proton translocation (for every two electrons transferred, four hydrogen ions are translocated across the cytoplasmic membrane), and thus conserves the redox energy in a proton gradient. This chain is NADH-quinone oxidoreductase subunit K, found in Phenylobacterium zucineum (strain HLK1).